The chain runs to 118 residues: NADH-ubiquinone oxidoreductase chain 3 (118 aa).

2 helical membrane-spanning segments follow: residues 4-24 (FAPI…PLGV) and 87-107 (IDPF…IGSL).

Belongs to the complex I subunit 3 family.

The protein localises to the mitochondrion membrane. It catalyses the reaction a ubiquinone + NADH + 5 H(+)(in) = a ubiquinol + NAD(+) + 4 H(+)(out). Core subunit of the mitochondrial membrane respiratory chain NADH dehydrogenase (Complex I) that is believed to belong to the minimal assembly required for catalysis. Complex I functions in the transfer of electrons from NADH to the respiratory chain. The immediate electron acceptor for the enzyme is believed to be ubiquinone. The polypeptide is NADH-ubiquinone oxidoreductase chain 3 (ND3) (Panax ginseng (Korean ginseng)).